The following is a 493-amino-acid chain: Malonyl-CoA decarboxylase, mitochondrial (493 aa).

The N-terminal 39 residues, 1–39 (MRGFGPGLTARRLLPLRLPPRPPGPRLASGQAAGALERA), are a transit peptide targeting the mitochondrion. Residues 40-190 (MDELLRRAVP…VLKGMLSEWF (151 aa)) are alpha-helical domain. Lysine 59 carries the post-translational modification N6-acetyllysine. Lysine 168 is modified (N6-acetyllysine; alternate). Lysine 168 is subject to N6-succinyllysine; alternate. The interval 191 to 493 (SSGFLNLERV…VAQFQKNSKL (303 aa)) is catalytic domain. Lysine 211 is subject to N6-acetyllysine. The residue at position 222 (lysine 222) is an N6-succinyllysine. Malonyl-CoA-binding positions include 299 to 305 (QGVELGT) and serine 329. The active-site Proton acceptor is serine 329. Lysine 389 carries the N6-acetyllysine modification. Residue histidine 423 coordinates malonyl-CoA. Catalysis depends on histidine 423, which acts as the Proton donor. Lysine 472 is subject to N6-acetyllysine. The short motif at 491–493 (SKL) is the Microbody targeting signal element.

As to quaternary structure, homotetramer. Dimer of dimers. The two subunits within a dimer display conformational differences suggesting that at any given moment, only one of the two subunits is competent for malonyl-CoA binding and catalytic activity. Under oxidizing conditions, can form disulfide-linked homotetramers (in vitro). Associates with the peroxisomal targeting signal receptor PEX5. Post-translationally, acetylation at Lys-472 activates malonyl-CoA decarboxylase activity. Deacetylation at Lys-472 by SIRT4 represses activity, leading to promote lipogenesis. Interchain disulfide bonds may form in peroxisomes (Potential). Interchain disulfide bonds are not expected to form in the reducing environment of the cytoplasm and mitochondria. In terms of tissue distribution, expressed in fibroblasts and hepatoblastoma cells (at protein level). Expressed strongly in heart, liver, skeletal muscle, kidney and pancreas. Expressed in myotubes. Expressed weakly in brain, placenta, spleen, thymus, testis, ovary and small intestine.

It localises to the cytoplasm. The protein resides in the mitochondrion matrix. The protein localises to the peroxisome. It is found in the peroxisome matrix. The enzyme catalyses malonyl-CoA + H(+) = acetyl-CoA + CO2. Its pathway is metabolic intermediate biosynthesis; acetyl-CoA biosynthesis; acetyl-CoA from malonyl-CoA: step 1/1. Its activity is regulated as follows. Malonyl-CoA decarboxylase activity does not require any cofactors or divalent metal ions. Formation of interchain disulfide bonds leads to positive cooperativity between active sites and increases the affinity for malonyl-CoA and the catalytic efficiency (in vitro). Functionally, catalyzes the conversion of malonyl-CoA to acetyl-CoA. In the fatty acid biosynthesis MCD selectively removes malonyl-CoA and thus assures that methyl-malonyl-CoA is the only chain elongating substrate for fatty acid synthase and that fatty acids with multiple methyl side chains are produced. In peroxisomes it may be involved in degrading intraperoxisomal malonyl-CoA, which is generated by the peroxisomal beta-oxidation of odd chain-length dicarboxylic fatty acids. Plays a role in the metabolic balance between glucose and lipid oxidation in muscle independent of alterations in insulin signaling. May play a role in controlling the extent of ischemic injury by promoting glucose oxidation. The protein is Malonyl-CoA decarboxylase, mitochondrial of Homo sapiens (Human).